A 465-amino-acid chain; its full sequence is 6-phospho-beta-glucosidase GmuD (465 aa).

The Proton donor role is filled by E170. E368 functions as the Nucleophile in the catalytic mechanism.

The protein belongs to the glycosyl hydrolase 1 family.

It catalyses the reaction 6-phospho-beta-D-glucosyl-(1-&gt;4)-D-glucose + H2O = D-glucose 6-phosphate + D-glucose. Phospho-beta-D-glucosidase that seems to be involved in the degradation of glucomannan. Is also capable of hydrolyzing aryl-phospho-beta-D-glucosides, although very weakly, and plays only a minor role, if any, in the degradation of these substrates in vivo. The sequence is that of 6-phospho-beta-glucosidase GmuD (gmuD) from Bacillus subtilis (strain 168).